Here is an 808-residue protein sequence, read N- to C-terminus: uncharacterized protein (808 aa).

35–42 (GPNNVGKT) lines the ATP pocket.

This is an uncharacterized protein from Methanocaldococcus jannaschii (strain ATCC 43067 / DSM 2661 / JAL-1 / JCM 10045 / NBRC 100440) (Methanococcus jannaschii).